Reading from the N-terminus, the 56-residue chain is uncharacterized protein (56 aa).

A helical transmembrane segment spans residues 12-32; sequence GITLFPYFAILILILAILVVG. The segment at 19–31 is hydrophobic; sequence FAILILILAILVV.

The protein localises to the membrane. This is an uncharacterized protein from Chenopodium amaranticolor (Quinoa).